Consider the following 564-residue polypeptide: Poly(U)-binding-splicing factor PUF60 (564 aa).

Residues 1-521 are inhibits homodimerization; sequence MATATIALQV…EDAEIIVKIF (521 aa). The disordered stretch occupies residues 37–61; sequence KWKPPQGTESIKMENGQSTGTKLGL. Residue Lys-48 forms a Glycyl lysine isopeptide (Lys-Gly) (interchain with G-Cter in SUMO2) linkage. Thr-65 carries the phosphothreonine modification. The interval 82–564 is inhibits transcriptional repression, interaction with ERCC3 and apoptosis induction; it reads QSIKSVLVKQ…ERFDNSDLSA (483 aa). Lys-85 participates in a covalent cross-link: Glycyl lysine isopeptide (Lys-Gly) (interchain with G-Cter in SUMO2). Ser-117 carries the post-translational modification Phosphoserine. RRM domains follow at residues 134–212 and 231–309; these read CRVY…RPSN and NRIY…KAVT. Position 249 is a phosphoserine (Ser-249). At Lys-256 the chain carries N6-acetyllysine. Thr-319 carries the post-translational modification Phosphothreonine. A disordered region spans residues 421–442; it reads KKEKEEEELFPESERPEMLSEQ. Residue Lys-424 forms a Glycyl lysine isopeptide (Lys-Gly) (interchain with G-Cter in SUMO2) linkage. Residues 432–442 are compositionally biased toward basic and acidic residues; it reads ESERPEMLSEQ. N6-acetyllysine is present on Lys-459. A Glycyl lysine isopeptide (Lys-Gly) (interchain with G-Cter in SUMO2) cross-link involves residue Lys-463. The 88-residue stretch at 467–554 folds into the RRM 3; atypical domain; it reads TVMVLRNMVD…RKVVAEVYDQ (88 aa).

The protein belongs to the RRM half pint family. As to quaternary structure, homodimer. Associates with the spliceosome. Found in a complex with RO60 and Y5 RNA. Found in a complex with FUBP1 and far upstream element (FUSE) DNA segment. Interacts directly with ERCC3. Interacts with CDK7 and GTF2H1. Interacts with SRSF11/P54. Interacts with ARGLU1; interaction may be involved in ARGLU1-mediated modulation of alternative splicing.

It localises to the nucleus. Its function is as follows. DNA- and RNA-binding protein, involved in several nuclear processes such as pre-mRNA splicing, apoptosis and transcription regulation. In association with FUBP1 regulates MYC transcription at the P2 promoter through the core-TFIIH basal transcription factor. Acts as a transcriptional repressor through the core-TFIIH basal transcription factor. Represses FUBP1-induced transcriptional activation but not basal transcription. Decreases ERCC3 helicase activity. Is also involved in pre-mRNA splicing. Promotes splicing of an intron with weak 3'-splice site and pyrimidine tract in a cooperative manner with U2AF2. Involved in apoptosis induction when overexpressed in HeLa cells. Modulates alternative splicing of several mRNAs. Binds to relaxed DNA of active promoter regions. Binds to the pyrimidine tract and 3'-splice site regions of pre-mRNA; binding is enhanced in presence of U2AF2. Binds to Y5 RNA in association with RO60. Binds to poly(U) RNA. This chain is Poly(U)-binding-splicing factor PUF60, found in Rattus norvegicus (Rat).